The chain runs to 457 residues: Glutamate--tRNA ligase 2 (457 aa).

The 'HIGH' region signature appears at 9–19 (PSPTGYIHIGN). The 'KMSKS' region signature appears at 250–254 (GLSKR). ATP is bound at residue K253.

Belongs to the class-I aminoacyl-tRNA synthetase family. Glutamate--tRNA ligase type 1 subfamily. In terms of assembly, monomer.

The protein localises to the cytoplasm. The catalysed reaction is tRNA(Glu) + L-glutamate + ATP = L-glutamyl-tRNA(Glu) + AMP + diphosphate. Functionally, catalyzes the attachment of glutamate to tRNA(Glu) in a two-step reaction: glutamate is first activated by ATP to form Glu-AMP and then transferred to the acceptor end of tRNA(Glu). The protein is Glutamate--tRNA ligase 2 of Brucella melitensis biotype 1 (strain ATCC 23456 / CCUG 17765 / NCTC 10094 / 16M).